The chain runs to 244 residues: Small ribosomal subunit protein uS3 (244 aa).

The KH type-2 domain occupies 39–110; the sequence is IRNFIQKKYS…QVRINVVEVE (72 aa). The tract at residues 221 to 244 is disordered; it reads GAIPRRKGSRKPQQFEDRSSNENS. Over residues 233–244 the composition is skewed to basic and acidic residues; sequence QQFEDRSSNENS.

This sequence belongs to the universal ribosomal protein uS3 family. As to quaternary structure, part of the 30S ribosomal subunit. Forms a tight complex with proteins S10 and S14.

In terms of biological role, binds the lower part of the 30S subunit head. Binds mRNA in the 70S ribosome, positioning it for translation. The polypeptide is Small ribosomal subunit protein uS3 (Prochlorococcus marinus (strain MIT 9515)).